The following is a 372-amino-acid chain: uncharacterized protein (372 aa).

Residues Asp-202 and Gly-227 to Phe-229 contribute to the S-adenosyl-L-methionine site.

Belongs to the class I-like SAM-binding methyltransferase superfamily. Cation-independent O-methyltransferase family.

This is an uncharacterized protein from Methanocaldococcus jannaschii (strain ATCC 43067 / DSM 2661 / JAL-1 / JCM 10045 / NBRC 100440) (Methanococcus jannaschii).